A 595-amino-acid chain; its full sequence is uncharacterized protein (595 aa).

Positions methionine 1–cysteine 21 are disordered. WD repeat units lie at residues glutamate 56–lysine 95, alanine 100–phenylalanine 143, glycine 144–serine 184, valine 187–glutamate 226, alanine 229–glutamate 268, glycine 313–leucine 352, serine 356–aspartate 393, lysine 433–valine 472, aspartate 477–serine 516, phenylalanine 520–alanine 559, and histidine 564–threonine 594.

This sequence belongs to the WD repeat AIP1 family.

This is an uncharacterized protein from Schizosaccharomyces pombe (strain 972 / ATCC 24843) (Fission yeast).